The chain runs to 274 residues: tRNA-cytidine(32) 2-sulfurtransferase (274 aa).

The PP-loop motif signature appears at 40–45 (SGGKDS). [4Fe-4S] cluster is bound by residues Cys-115, Cys-118, and Cys-206.

Belongs to the TtcA family. In terms of assembly, homodimer. Mg(2+) is required as a cofactor. The cofactor is [4Fe-4S] cluster.

The protein resides in the cytoplasm. It catalyses the reaction cytidine(32) in tRNA + S-sulfanyl-L-cysteinyl-[cysteine desulfurase] + AH2 + ATP = 2-thiocytidine(32) in tRNA + L-cysteinyl-[cysteine desulfurase] + A + AMP + diphosphate + H(+). It participates in tRNA modification. Functionally, catalyzes the ATP-dependent 2-thiolation of cytidine in position 32 of tRNA, to form 2-thiocytidine (s(2)C32). The sulfur atoms are provided by the cysteine/cysteine desulfurase (IscS) system. This chain is tRNA-cytidine(32) 2-sulfurtransferase, found in Pseudomonas syringae pv. tomato (strain ATCC BAA-871 / DC3000).